The sequence spans 171 residues: Large ribosomal subunit protein bL21 (171 aa).

A disordered region spans residues 144 to 171 (AAPAKAEAAPKKKAAPKKAAAKTEEGEA). Positions 154 to 163 (KKKAAPKKAA) are enriched in basic residues.

The protein belongs to the bacterial ribosomal protein bL21 family. As to quaternary structure, part of the 50S ribosomal subunit. Contacts protein L20.

Its function is as follows. This protein binds to 23S rRNA in the presence of protein L20. This is Large ribosomal subunit protein bL21 from Caulobacter vibrioides (strain ATCC 19089 / CIP 103742 / CB 15) (Caulobacter crescentus).